Reading from the N-terminus, the 151-residue chain is Putative pre-16S rRNA nuclease (151 aa).

This sequence belongs to the YqgF nuclease family.

The protein localises to the cytoplasm. In terms of biological role, could be a nuclease involved in processing of the 5'-end of pre-16S rRNA. The protein is Putative pre-16S rRNA nuclease of Prochlorococcus marinus (strain MIT 9515).